Reading from the N-terminus, the 77-residue chain is Acyl carrier protein (77 aa).

The region spanning 2 to 77 is the Carrier domain; the sequence is SNIEERVRNI…SAIDYVVNNG (76 aa). The residue at position 37 (Ser-37) is an O-(pantetheine 4'-phosphoryl)serine.

Belongs to the acyl carrier protein (ACP) family. 4'-phosphopantetheine is transferred from CoA to a specific serine of apo-ACP by AcpS. This modification is essential for activity because fatty acids are bound in thioester linkage to the sulfhydryl of the prosthetic group.

The protein resides in the cytoplasm. Its pathway is lipid metabolism; fatty acid biosynthesis. Functionally, carrier of the growing fatty acid chain in fatty acid biosynthesis. This is Acyl carrier protein from Psychromonas ingrahamii (strain DSM 17664 / CCUG 51855 / 37).